The chain runs to 30 residues: Bacteriocin curvaticin (30 aa).

An intrachain disulfide couples Cys-9 to Cys-14.

It is found in the secreted. Functionally, has antibacterial activity against the Gram-positive bacterium L.monocytogenes. This is Bacteriocin curvaticin from Latilactobacillus curvatus (Lactobacillus curvatus).